The primary structure comprises 461 residues: V-type ATP synthase beta chain (461 aa).

Belongs to the ATPase alpha/beta chains family.

In terms of biological role, produces ATP from ADP in the presence of a proton gradient across the membrane. The V-type beta chain is a regulatory subunit. The chain is V-type ATP synthase beta chain from Clostridium botulinum (strain ATCC 19397 / Type A).